A 101-amino-acid polypeptide reads, in one-letter code: Small ribosomal subunit protein uS10 (101 aa).

Belongs to the universal ribosomal protein uS10 family. Part of the 30S ribosomal subunit.

In terms of biological role, involved in the binding of tRNA to the ribosomes. The protein is Small ribosomal subunit protein uS10 of Phocaeicola vulgatus (strain ATCC 8482 / DSM 1447 / JCM 5826 / CCUG 4940 / NBRC 14291 / NCTC 11154) (Bacteroides vulgatus).